Here is a 318-residue protein sequence, read N- to C-terminus: Deoxyribose-phosphate aldolase (318 aa).

Aspartate 155 acts as the Proton donor/acceptor in catalysis. The Schiff-base intermediate with acetaldehyde role is filled by lysine 218. Lysine 254 acts as the Proton donor/acceptor in catalysis.

The protein belongs to the DeoC/FbaB aldolase family. DeoC type 2 subfamily. As to quaternary structure, interacts with YBX1.

Its subcellular location is the cytoplasm. It localises to the cytoplasmic granule. The protein localises to the nucleus. It carries out the reaction 2-deoxy-D-ribose 5-phosphate = D-glyceraldehyde 3-phosphate + acetaldehyde. It participates in carbohydrate degradation; 2-deoxy-D-ribose 1-phosphate degradation; D-glyceraldehyde 3-phosphate and acetaldehyde from 2-deoxy-alpha-D-ribose 1-phosphate: step 2/2. Catalyzes a reversible aldol reaction between acetaldehyde and D-glyceraldehyde 3-phosphate to generate 2-deoxy-D-ribose 5-phosphate. Participates in stress granule (SG) assembly. May allow ATP production from extracellular deoxyinosine in conditions of energy deprivation. In Bos taurus (Bovine), this protein is Deoxyribose-phosphate aldolase (DERA).